Here is a 1642-residue protein sequence, read N- to C-terminus: Mitochondrial 3' processome subunit 2 (1642 aa).

Residues 1 to 27 (MGLPFLCHTRVCLFSNKIPFVLCGSRF) constitute a mitochondrion transit peptide. 2 disordered regions span residues 43-69 (ETLNFPELSSPSTSKEPSVGSDSPQKK) and 745-772 (KGEKTDVVQHQQPSRLNEGGELPTLSGP). Residues 49 to 65 (ELSSPSTSKEPSVGSDS) are compositionally biased toward polar residues.

As to quaternary structure, component of the mitochondrial 3' processome (MPsome) complex composed at least of terminal uridylyltransferase KRET1/TUT1, 3'-5' exonuclease DSS1, MPSS1, MPSS2 and MPSS3. Within the complex, interacts with DSS1.

The protein resides in the mitochondrion. As part of the mitochondrial 3' processome (MPsome), involved in the maturation of guided RNA (gRNA) precursors. The polypeptide is Mitochondrial 3' processome subunit 2 (Trypanosoma brucei brucei).